Reading from the N-terminus, the 779-residue chain is Molybdenum cofactor sulfurase (779 aa).

Lys-247 is modified (N6-(pyridoxal phosphate)lysine). Cys-409 is a catalytic residue. Residues 624–779 (SQSLGLEGVR…LTCGDVIVVS (156 aa)) form the MOSC domain. Ser-732 is modified (phosphoserine).

This sequence belongs to the class-V pyridoxal-phosphate-dependent aminotransferase family. MOCOS subfamily. Pyridoxal 5'-phosphate is required as a cofactor.

It catalyses the reaction Mo-molybdopterin + L-cysteine + AH2 = thio-Mo-molybdopterin + L-alanine + A + H2O. The protein operates within cofactor biosynthesis; molybdopterin biosynthesis. Sulfurates the molybdenum cofactor. Sulfation of molybdenum is essential for xanthine dehydrogenase (XDH) and aldehyde oxidase (ADO) enzymes in which molybdenum cofactor is liganded by 1 oxygen and 1 sulfur atom in active form. The protein is Molybdenum cofactor sulfurase of Drosophila mojavensis (Fruit fly).